A 525-amino-acid polypeptide reads, in one-letter code: GMP synthase [glutamine-hydrolyzing] (525 aa).

The Glutamine amidotransferase type-1 domain occupies 9–207 (RILILDFGSQ…VRDICQCEAL (199 aa)). The active-site Nucleophile is cysteine 86. Active-site residues include histidine 181 and glutamate 183. The 193-residue stretch at 208–400 (WTPAKIIDDA…LGLPYDMLYR (193 aa)) folds into the GMPS ATP-PPase domain. 235–241 (SGGVDSS) contacts ATP.

As to quaternary structure, homodimer.

It carries out the reaction XMP + L-glutamine + ATP + H2O = GMP + L-glutamate + AMP + diphosphate + 2 H(+). It functions in the pathway purine metabolism; GMP biosynthesis; GMP from XMP (L-Gln route): step 1/1. Functionally, catalyzes the synthesis of GMP from XMP. The polypeptide is GMP synthase [glutamine-hydrolyzing] (Shigella boydii serotype 4 (strain Sb227)).